The sequence spans 483 residues: Regulatory protein ViaA (483 aa).

This sequence belongs to the ViaA family. As to quaternary structure, homodimer. Interacts with RavA.

It localises to the cytoplasm. Component of the RavA-ViaA chaperone complex, which may act on the membrane to optimize the function of some of the respiratory chains. ViaA stimulates the ATPase activity of RavA. The sequence is that of Regulatory protein ViaA from Shigella flexneri.